The following is a 149-amino-acid chain: UPF0178 protein VFMJ11_0615 (149 aa).

Belongs to the UPF0178 family.

The chain is UPF0178 protein VFMJ11_0615 from Aliivibrio fischeri (strain MJ11) (Vibrio fischeri).